The following is a 301-amino-acid chain: Recombination-associated protein RdgC (301 aa).

It belongs to the RdgC family.

The protein localises to the cytoplasm. The protein resides in the nucleoid. May be involved in recombination. The chain is Recombination-associated protein RdgC from Pseudoalteromonas atlantica (strain T6c / ATCC BAA-1087).